The primary structure comprises 197 residues: HTH-type transcriptional regulator BetI (197 aa).

An HTH tetR-type domain is found at 8–68; the sequence is PIRRQQLIQA…ATMRHLMNAL (61 aa). A DNA-binding region (H-T-H motif) is located at residues 31-50; the sequence is SIALIARLAGVSNGIISHYF.

The protein operates within amine and polyamine biosynthesis; betaine biosynthesis via choline pathway [regulation]. In terms of biological role, repressor involved in the biosynthesis of the osmoprotectant glycine betaine. It represses transcription of the choline transporter BetT and the genes of BetAB involved in the synthesis of glycine betaine. The polypeptide is HTH-type transcriptional regulator BetI (Pseudomonas syringae pv. tomato (strain ATCC BAA-871 / DC3000)).